We begin with the raw amino-acid sequence, 521 residues long: Bifunctional purine biosynthesis protein PurH (521 aa).

Positions 1–145 constitute an MGS-like domain; the sequence is MIKQALISVS…KNHRDVTVVV (145 aa).

This sequence belongs to the PurH family.

The catalysed reaction is (6R)-10-formyltetrahydrofolate + 5-amino-1-(5-phospho-beta-D-ribosyl)imidazole-4-carboxamide = 5-formamido-1-(5-phospho-D-ribosyl)imidazole-4-carboxamide + (6S)-5,6,7,8-tetrahydrofolate. The enzyme catalyses IMP + H2O = 5-formamido-1-(5-phospho-D-ribosyl)imidazole-4-carboxamide. It participates in purine metabolism; IMP biosynthesis via de novo pathway; 5-formamido-1-(5-phospho-D-ribosyl)imidazole-4-carboxamide from 5-amino-1-(5-phospho-D-ribosyl)imidazole-4-carboxamide (10-formyl THF route): step 1/1. The protein operates within purine metabolism; IMP biosynthesis via de novo pathway; IMP from 5-formamido-1-(5-phospho-D-ribosyl)imidazole-4-carboxamide: step 1/1. This chain is Bifunctional purine biosynthesis protein PurH, found in Burkholderia lata (strain ATCC 17760 / DSM 23089 / LMG 22485 / NCIMB 9086 / R18194 / 383).